A 493-amino-acid polypeptide reads, in one-letter code: Galactose-1-phosphate uridylyltransferase 2 (493 aa).

Belongs to the galactose-1-phosphate uridylyltransferase type 2 family.

The protein resides in the cytoplasm. The enzyme catalyses alpha-D-galactose 1-phosphate + UDP-alpha-D-glucose = alpha-D-glucose 1-phosphate + UDP-alpha-D-galactose. The protein operates within carbohydrate metabolism; galactose metabolism. The chain is Galactose-1-phosphate uridylyltransferase 2 (galT2) from Streptococcus pneumoniae serotype 4 (strain ATCC BAA-334 / TIGR4).